Reading from the N-terminus, the 474-residue chain is MFTKAEDVLRYIRDEDVQFIDVRFCDLPGIMQHFTIPTQVFAESVFTDGLMFDGSSIRGFQAIHESDMLLLPDPQTAFVDPFREHKTLAMTFFIHDPITKEQYSRDPRNIAKKAETYLRGTSIADTAYFGPEAEFYIFDDVRYDYNPYGSMHHVDSVEAAWNTSRKEEGGNLGYKPRFKGGYFPVPPTDHFTDLRSEMTRVLYETGITVEMQHHEVGTAGQAEIDIRYDTLLKTADNLMLYKYVIRNVARSRGKTVTFMPKPLFEDNGSGMHVHSSLWKDGEPLFYSPNGYGGLSDTARYYIGGLLHHAPALLAFTNPTTNSYRRLVPGYEAPVNLVYSARNRSACCRIPLGGDSPKAKRVEFRVPDPSCNPYLAFAAMLMAGLDGIRNKIDPPDPIDKDLYELPPDELAAVPQVPGSLEKVLDALEADNDFLREGDVFTTDLIETWLEYKRLNEVDAIRLRPHPYEFTLYYDI.

A GS beta-grasp domain is found at 15 to 99; it reads EDVQFIDVRF…MTFFIHDPIT (85 aa). Residues 107–474 enclose the GS catalytic domain; it reads PRNIAKKAET…PYEFTLYYDI (368 aa). Glutamate 132 and glutamate 134 together coordinate Mg(2+). Glutamate 210 is a binding site for ATP. Positions 215 and 223 each coordinate Mg(2+). L-glutamate contacts are provided by residues 267 to 268 and glycine 268; that span reads NG. Histidine 272 is a Mg(2+) binding site. ATP is bound by residues 274-276 and serine 276; that span reads HSS. Positions 325, 331, and 343 each coordinate L-glutamate. The ATP site is built by arginine 343, arginine 348, and lysine 357. Glutamate 362 is a Mg(2+) binding site. Arginine 364 contacts L-glutamate. An O-AMP-tyrosine modification is found at tyrosine 402.

It belongs to the glutamine synthetase family. Oligomer of 12 subunits arranged in the form of two hexagons. Requires Mg(2+) as cofactor.

It is found in the cytoplasm. It catalyses the reaction L-glutamate + NH4(+) + ATP = L-glutamine + ADP + phosphate + H(+). Its activity is regulated as follows. The activity of this enzyme could be controlled by adenylation under conditions of abundant glutamine. Catalyzes the ATP-dependent biosynthesis of glutamine from glutamate and ammonia. The protein is Glutamine synthetase of Frankia alni.